Here is a 480-residue protein sequence, read N- to C-terminus: Proline--tRNA ligase (480 aa).

The protein belongs to the class-II aminoacyl-tRNA synthetase family. ProS type 3 subfamily. As to quaternary structure, homodimer.

It is found in the cytoplasm. The enzyme catalyses tRNA(Pro) + L-proline + ATP = L-prolyl-tRNA(Pro) + AMP + diphosphate. In terms of biological role, catalyzes the attachment of proline to tRNA(Pro) in a two-step reaction: proline is first activated by ATP to form Pro-AMP and then transferred to the acceptor end of tRNA(Pro). This Pyrococcus abyssi (strain GE5 / Orsay) protein is Proline--tRNA ligase.